Reading from the N-terminus, the 314-residue chain is Olfactory receptor 51I1 (314 aa).

At 1-27 (MLGLNGTPFQPATLQLTGIPGIQTGLT) the chain is on the extracellular side. Residues 28–48 (WVALIFCILYMISIVGNLSIL) form a helical membrane-spanning segment. Topologically, residues 49–56 (TLVFWEPA) are cytoplasmic. The chain crosses the membrane as a helical span at residues 57 to 77 (LHQPMYYFLSMLALNDLGVSF). The Extracellular segment spans residues 78–101 (STLPTVISTFCFNYNHVAFNACLV). Cys-99 and Cys-191 are oxidised to a cystine. The helical transmembrane segment at 102 to 122 (QMFFIHTFSFMESGILLAMSL) threads the bilayer. Topologically, residues 123–141 (DRFVAICYPLRYVTVLTHN) are cytoplasmic. The chain crosses the membrane as a helical span at residues 142–162 (RILAMGLGILTKSFTTLFPFP). The Extracellular portion of the chain corresponds to 163–198 (FVVKRLPFCKGNVLHHSYCLHPDLMKVACGDIHVNN). Residues 199–219 (IYGLLVIIFTYGMDSTFILLS) traverse the membrane as a helical segment. At 220–239 (YALILRAMLVIISQEQRLKA) the chain is on the cytoplasmic side. Residues 240 to 260 (LNTCMSHICAVLAFYVPIIAV) form a helical membrane-spanning segment. Topologically, residues 261 to 275 (SMIHRFWKSAPPVVH) are extracellular. Residues 276–296 (VMMSNVYLFVPPMLNPIIYSV) form a helical membrane-spanning segment. The Cytoplasmic portion of the chain corresponds to 297-314 (KTKEIRKGILKFFHKSQA).

Belongs to the G-protein coupled receptor 1 family.

It is found in the cell membrane. In terms of biological role, odorant receptor. The chain is Olfactory receptor 51I1 (OR51I1) from Homo sapiens (Human).